Reading from the N-terminus, the 155-residue chain is MTRLTGLRRPLLPIAGAKQAPEQAIDGPQVEVPLTAVDRRRVRRRLHAPDGAELQLAFPTGTVLSPGTVLGTRGGVSYVVSAAPEDVAVVVPRTLAEAAHTAHAVGNLHRDFVEDAGAFLTPWDAPIELLLTRLGVPFTRETRPFHGRPSWEHEG.

This sequence belongs to the UreE family.

It is found in the cytoplasm. Involved in urease metallocenter assembly. Binds nickel. Probably functions as a nickel donor during metallocenter assembly. The chain is Urease accessory protein UreE from Deinococcus radiodurans (strain ATCC 13939 / DSM 20539 / JCM 16871 / CCUG 27074 / LMG 4051 / NBRC 15346 / NCIMB 9279 / VKM B-1422 / R1).